The chain runs to 392 residues: D-amino-acid oxidase 2 (392 aa).

8 residues coordinate FAD: Ser10, Ile13, Arg33, Asp34, Ala45, Ser46, Gly50, and Asn52. 4 residues coordinate anthranilate: Phe56, Tyr245, Tyr262, and Arg311. Residues Tyr245, Tyr262, and Arg311 each coordinate (R)-lactate. FAD is bound by residues Arg311, Gly361, Ser362, Gly364, and Gln366. Ser362 contacts anthranilate. Ser362 contacts (R)-lactate. The Microbody targeting signal signature appears at 390–392 (AKL).

It belongs to the DAMOX/DASOX family. FAD serves as cofactor.

It is found in the peroxisome matrix. It catalyses the reaction a D-alpha-amino acid + O2 + H2O = a 2-oxocarboxylate + H2O2 + NH4(+). The catalysed reaction is D-methionine + O2 + H2O = 4-methylsulfanyl-2-oxobutanoate + H2O2 + NH4(+). The enzyme catalyses D-serine + O2 + H2O = 3-hydroxypyruvate + H2O2 + NH4(+). It carries out the reaction D-histidine + O2 + H2O = 3-(imidazol-5-yl)pyruvate + H2O2 + NH4(+). It catalyses the reaction D-proline + O2 = 1-pyrroline-2-carboxylate + H2O2. The catalysed reaction is D-alanine + O2 + H2O = pyruvate + H2O2 + NH4(+). The enzyme catalyses D-leucine + O2 + H2O = 4-methyl-2-oxopentanoate + H2O2 + NH4(+). It carries out the reaction D-valine + O2 + H2O = 3-methyl-2-oxobutanoate + H2O2 + NH4(+). Functionally, catalyzes the oxidative deamination of D-amino acids with broad substrate specificity. Enables the organism to utilize D-amino acids as a source of nutrients. Enables the organism to utilize D-alanine, D-cysteine, D-histidine, D-leucine, D-methionine, D-phenylalanine, D-proline, D-serine, D-threonine, D-aspartate and D-valine as a nitrogen source and may also contribute to utlization of D-tryptophan, D-tyrosine and D-asparagine as a nitrogen source. Protects the organism from the toxicity of D-amino acids, including from D-alanine. May play a role in its interaction with the host. The protein is D-amino-acid oxidase 2 of Cryptococcus deuterogattii (strain R265) (Cryptococcus gattii VGII (strain R265)).